Reading from the N-terminus, the 51-residue chain is uncharacterized protein (51 aa).

Functionally, this protein is non-essential for virus function. This is an uncharacterized protein from Sulfolobus spindle-shape virus 1 (SSV1).